The chain runs to 196 residues: Alpha-crystallin A chain (196 aa).

Position 1 is an N-acetylmethionine (M1). The segment at 1 to 63 is required for complex formation with BFSP1 and BFSP2; that stretch reads MDVTIQHPWF…RTVLDSGISE (63 aa). Q6 bears the Deamidated glutamine; partial mark. S45 carries the post-translational modification Phosphoserine. Q50 carries the deamidated glutamine; partial modification. Positions 76–185 constitute a sHSP domain; sequence HAGNPKNNPI…GHSERAIPVS (110 aa). K93 and K122 each carry N6-acetyllysine. H123 contributes to the Zn(2+) binding site. Residue N124 is modified to Deamidated asparagine; partial. The Zn(2+) site is built by E125 and H130. S145 bears the Phosphoserine mark. N146 is subject to Deamidated asparagine; partial. The segment at 168 to 196 is disordered; that stretch reads KVQSGLDAGHSERAIPVSREEKPSSAPSS. Q170 carries the deamidated glutamine; partial modification. A compositionally biased stretch (basic and acidic residues) spans 176 to 190; sequence GHSERAIPVSREEKP. A Zn(2+)-binding site is contributed by H177. A glycan (O-linked (GlcNAc) serine) is linked at S185.

This sequence belongs to the small heat shock protein (HSP20) family. As to quaternary structure, heteromer composed of three CRYAA and one CRYAB subunits. Inter-subunit bridging via zinc ions enhances stability, which is crucial as there is no protein turn over in the lens. Can also form homodimers and homotetramers (dimers of dimers) which serve as the building blocks of homooligomers. Within homooligomers, the zinc-binding motif is created from residues of 3 different molecules. His-123 and Glu-125 from one molecule are ligands of the zinc ion, and His-130 and His-177 residues from additional molecules complete the site with tetrahedral coordination geometry. Part of a complex required for lens intermediate filament formation composed of BFSP1, BFSP2 and CRYAA. Post-translationally, acetylation at Lys-93 may increase chaperone activity. Undergoes age-dependent proteolytical cleavage at the C-terminus.

Its subcellular location is the cytoplasm. It localises to the nucleus. Its function is as follows. Contributes to the transparency and refractive index of the lens. Acts as a chaperone, preventing aggregation of various proteins under a wide range of stress conditions. Required for the correct formation of lens intermediate filaments as part of a complex composed of BFSP1, BFSP2 and CRYAA. The sequence is that of Alpha-crystallin A chain (CRYAA) from Mesocricetus auratus (Golden hamster).